The chain runs to 597 residues: Chaperonin 60 subunit beta 3, chloroplastic (597 aa).

The interval 1–20 is disordered; that stretch reads MASTFSATSSMGSSLAPPSN. The transit peptide at 1–29 directs the protein to the chloroplast; sequence MASTFSATSSMGSSLAPPSNRLSSFVSIS. Serine 97 and serine 474 each carry phosphoserine. Residues 387–489 are a coiled coil; it reads STEEVVKKRV…KETLANDEEK (103 aa).

The protein belongs to the chaperonin (HSP60) family. Part of the Cpn60 complex composed of 7 alpha and 7 beta subunits. Can also form a complex composed of 14 beta subunits only. Both complexes show ATPase activity. The Cpn60 complex interacts with the Cpn10 complex.

It is found in the plastid. The protein localises to the chloroplast. In terms of biological role, involved in protein assisted folding. The chain is Chaperonin 60 subunit beta 3, chloroplastic (CPN60B3) from Arabidopsis thaliana (Mouse-ear cress).